Consider the following 899-residue polypeptide: Origin recognition complex subunit 5 (899 aa).

Disordered regions lie at residues 27–47 (FSSPKKSRKESPIFVQNNDDT), 100–166 (DRIN…EYKD), and 194–238 (KNLE…DGNL). Acidic residues predominate over residues 105 to 160 (SEEETNINDDNNDDNNGDYDDDNNSDDDDDNDDNNNNDDNNNDDDEDVDDFEDIKE). The span at 207–218 (SSDNSMTSSSEE) shows a compositional bias: low complexity. A compositionally biased stretch (basic and acidic residues) spans 227–237 (ESDKESDKDGN). 303 to 310 (GLPGMGKT) lines the ATP pocket. The interval 409–469 (KRTTENIRSP…NNNSNNVRFN (61 aa)) is disordered. Over residues 455–469 (KNNFNNNNSNNVRFN) the composition is skewed to low complexity.

Belongs to the ORC5 family. In terms of assembly, component of the origin recognition complex (ORC). Interacts with PCNA1; the interaction occurs during the trophozoite stage but not at the late schizont stage.

The protein resides in the nucleus. The catalysed reaction is ATP + H2O = ADP + phosphate + H(+). Functionally, component of the origin recognition complex (ORC) that binds origins of replication. In Plasmodium falciparum (isolate 3D7), this protein is Origin recognition complex subunit 5.